The sequence spans 544 residues: GMP synthase [glutamine-hydrolyzing] (544 aa).

One can recognise a Glutamine amidotransferase type-1 domain in the interval Thr-12–Gly-210. Cys-88 functions as the Nucleophile in the catalytic mechanism. Residues His-184 and Glu-186 contribute to the active site. A GMPS ATP-PPase domain is found at Trp-211–Arg-419. Position 239–245 (Ser-239–Thr-245) interacts with ATP. 4 residues coordinate XMP: Arg-312, Asp-481, Lys-536, and Glu-542.

As to quaternary structure, homodimer. Also forms a small population of homotetramers. The cofactor is Mg(2+).

It localises to the cytoplasm. Its subcellular location is the cytosol. The catalysed reaction is XMP + L-glutamine + ATP + H2O = GMP + L-glutamate + AMP + diphosphate + 2 H(+). The protein operates within purine metabolism; GMP biosynthesis; GMP from XMP (L-Gln route): step 1/1. Its activity is regulated as follows. The enzyme is inhibited by ECC1385; although this compound fails to inhibit growth of the organism. Catalyzes the conversion of xanthine monophosphate (XMP) to GMP in the presence of glutamine and ATP through an adenyl-XMP intermediate. The protein is GMP synthase [glutamine-hydrolyzing] of Cryptococcus neoformans var. grubii serotype A (strain H99 / ATCC 208821 / CBS 10515 / FGSC 9487) (Filobasidiella neoformans var. grubii).